Here is a 247-residue protein sequence, read N- to C-terminus: ATP synthase delta chain, chloroplastic (247 aa).

The transit peptide at 1 to 60 (MAALRLASFTLRPAAAAAASASSGATPAAPRSASFARAARGLPSLRLAPPRRRGDLVRPR) directs the protein to the chloroplast.

It belongs to the ATPase delta chain family. As to quaternary structure, F-type ATPases have 2 components, CF(1) - the catalytic core - and CF(0) - the membrane proton channel. CF(1) has five subunits: alpha(3), beta(3), gamma(1), delta(1), epsilon(1). CF(0) has three main subunits: a, b and c.

It localises to the plastid. The protein localises to the chloroplast thylakoid membrane. This protein seems to be part of the stalk that links CF(0) to CF(1). It either transmits conformational changes from CF(0) into CF(1) or is implicated in proton conduction. The chain is ATP synthase delta chain, chloroplastic (ATPD) from Sorghum bicolor (Sorghum).